Reading from the N-terminus, the 278-residue chain is Phosphatidylglycerol--prolipoprotein diacylglyceryl transferase (278 aa).

A run of 3 helical transmembrane segments spans residues 21–41 (WYGI…QASV), 54–74 (IIFW…VIFQ), and 88–108 (IWHG…TGII). Arginine 136 is a binding site for a 1,2-diacyl-sn-glycero-3-phospho-(1'-sn-glycerol). 2 helical membrane-spanning segments follow: residues 176 to 196 (QPTF…LILL) and 234 to 254 (IRVA…IMII).

Belongs to the Lgt family.

Its subcellular location is the cell membrane. The enzyme catalyses L-cysteinyl-[prolipoprotein] + a 1,2-diacyl-sn-glycero-3-phospho-(1'-sn-glycerol) = an S-1,2-diacyl-sn-glyceryl-L-cysteinyl-[prolipoprotein] + sn-glycerol 1-phosphate + H(+). Its pathway is protein modification; lipoprotein biosynthesis (diacylglyceryl transfer). Its function is as follows. Catalyzes the transfer of the diacylglyceryl group from phosphatidylglycerol to the sulfhydryl group of the N-terminal cysteine of a prolipoprotein, the first step in the formation of mature lipoproteins. In Staphylococcus xylosus, this protein is Phosphatidylglycerol--prolipoprotein diacylglyceryl transferase.